Reading from the N-terminus, the 81-residue chain is uncharacterized protein (81 aa).

It to yeast YDL157C.

The protein localises to the mitochondrion. This is an uncharacterized protein from Schizosaccharomyces pombe (strain 972 / ATCC 24843) (Fission yeast).